A 396-amino-acid polypeptide reads, in one-letter code: Purine ribonucleoside efflux pump NepI (396 aa).

The Cytoplasmic portion of the chain corresponds to 1–21 (MSEFIAENRGADAITRPNWSA). A helical transmembrane segment spans residues 22–42 (VFSVAFCVACLIIVEFLPVSL). Topologically, residues 43–54 (LTPMAQDLGISE) are periplasmic. The chain crosses the membrane as a helical span at residues 55-75 (GVAGQSVTVTAFVAMFASLFI). Residues 76-85 (TQTIQATDRR) are Cytoplasmic-facing. A helical transmembrane segment spans residues 86 to 106 (YVVILFAVLLTLSCLLVSFAN). Position 107 (Ser-107) is a topological domain, periplasmic. Residues 108–128 (FSLLLIGRACLGLALGGFWAI) traverse the membrane as a helical segment. Over 129–147 (SASLTMRLVPPRTVPKALS) the chain is Cytoplasmic. A helical membrane pass occupies residues 148–168 (VIFGAVSIALVIAAPLGGFLG). At 169–175 (ELIGWRN) the chain is on the periplasmic side. The helical transmembrane segment at 176–196 (VFNAAAAMGVLCIFWIIKSLP) threads the bilayer. Over 197-215 (SLPGEPSHQKQNTFRLLQR) the chain is Cytoplasmic. Residues 216–236 (PGVMAGMIAIFMSFAGQFAFF) form a helical membrane-spanning segment. The Periplasmic segment spans residues 237 to 255 (TYIRPVYMNLAGFGVDGLT). A helical transmembrane segment spans residues 256–276 (LVLLSFGIASFVGTSLSSFIL). Residues 277-281 (KRSVK) lie on the Cytoplasmic side of the membrane. A helical membrane pass occupies residues 282–302 (LALAGAPFVLALSALVLTLWG). The Periplasmic segment spans residues 303–305 (SDK). Residues 306–326 (IVATGVAIIWGLTFALIPVGW) form a helical membrane-spanning segment. Residues 327 to 343 (STWITRSLADQAEKAGS) lie on the Cytoplasmic side of the membrane. The helical transmembrane segment at 344-364 (IQVAVIQLANTCGAAIGGYAL) threads the bilayer. At 365–366 (DN) the chain is on the periplasmic side. A helical membrane pass occupies residues 367–387 (IGLTSPLMLSGTLMLLTALLV). The Cytoplasmic portion of the chain corresponds to 388-396 (TAKVKMKKS).

Belongs to the major facilitator superfamily. DHA1 family. NepI (TC 2.A.1.2.26) subfamily.

It is found in the cell inner membrane. The catalysed reaction is inosine(in) + H(+)(out) = inosine(out) + H(+)(in). It carries out the reaction guanosine(in) + H(+)(out) = guanosine(out) + H(+)(in). Functionally, involved in the efflux of purine ribonucleosides, such as inosine and guanosine. This is Purine ribonucleoside efflux pump NepI from Escherichia coli O127:H6 (strain E2348/69 / EPEC).